The following is an 874-amino-acid chain: Alanine--tRNA ligase (874 aa).

Zn(2+) is bound by residues His562, His566, Cys665, and His669.

It belongs to the class-II aminoacyl-tRNA synthetase family. Zn(2+) serves as cofactor.

It is found in the cytoplasm. The enzyme catalyses tRNA(Ala) + L-alanine + ATP = L-alanyl-tRNA(Ala) + AMP + diphosphate. Catalyzes the attachment of alanine to tRNA(Ala) in a two-step reaction: alanine is first activated by ATP to form Ala-AMP and then transferred to the acceptor end of tRNA(Ala). Also edits incorrectly charged Ser-tRNA(Ala) and Gly-tRNA(Ala) via its editing domain. This is Alanine--tRNA ligase from Pseudomonas fluorescens (strain ATCC BAA-477 / NRRL B-23932 / Pf-5).